The chain runs to 633 residues: Sodium- and chloride-dependent glycine transporter 1 (633 aa).

Residues 1 to 30 (MGLCVNGAVPSEATKKDENLKRGNWGNQIE) lie on the Cytoplasmic side of the membrane. 3 helical membrane-spanning segments follow: residues 31–51 (FVLTSVGYAVGLGNVWRFPYL), 58–78 (GAFMFPYFIMLIFCGIPLFFM), and 113–133 (YIGIYYNVVICIAFYYFFASM). The Extracellular portion of the chain corresponds to 134–208 (NRVLPWTYCN…ISEDIGDFGE (75 aa)). Asn158, Asn164, Asn173, and Asn179 each carry an N-linked (GlcNAc...) asparagine glycan. 9 helical membrane-spanning segments follow: residues 209 to 229 (VQLPLLGCLGVSWLVVFLCLI), 238 to 258 (VVYFTATFPYVVLTILFIRGI), 283 to 303 (VWGDAASQIFYSLGCAWGGLI), 330 to 350 (SVYAGFVIFSILGFMATHLGV), 373 to 393 (LLPISPLWSILFFFMLILLGL), 429 to 449 (IIGFLLGIPLTTQAGIYWLLL), 453 to 473 (YAASFSLVIISCIMCIAVMYI), 493 to 513 (LFFQICWRFISPGIIFFILIF), and 533 to 553 (ITIGFLMALSSVICIPLYAIF). Residues 554–633 (KIWCSEGDTF…GQAHTQDSKV (80 aa)) lie on the Cytoplasmic side of the membrane. The interval 588-633 (RYAQMSSTRSESNPEAQPLNPEKMKEDLSLTIQGSNGQAHTQDSKV) is disordered. Polar residues-rich tracts occupy residues 591–602 (QMSSTRSESNPE) and 617–633 (LTIQGSNGQAHTQDSKV).

Belongs to the sodium:neurotransmitter symporter (SNF) (TC 2.A.22) family. SLC6A9 subfamily. As to expression, first expressed in early tailbud stage embryos in the midbrain and anterior spinal cord, and weakly in the hindbrain. By late tailbud stages, expression extends posteriorly in the spinal cord to appear in between somites. Expressed in the forebrain, retina, between the somites and in the blood islands by the swimming tadpole stages.

The protein localises to the cell membrane. The enzyme catalyses glycine(out) + chloride(out) + 2 Na(+)(out) = glycine(in) + chloride(in) + 2 Na(+)(in). Sodium- and chloride-dependent glycine transporter which is essential for regulating glycine concentrations at inhibitory glycinergic synapses. This is Sodium- and chloride-dependent glycine transporter 1 from Xenopus laevis (African clawed frog).